Reading from the N-terminus, the 482-residue chain is tRNA sulfurtransferase (482 aa).

Residues leucine 61–arginine 165 form the THUMP domain. Residues leucine 183–isoleucine 184, lysine 265, glycine 287, and glutamine 296 contribute to the ATP site. Residues cysteine 344 and cysteine 456 are joined by a disulfide bond. Residues phenylalanine 404–proline 482 form the Rhodanese domain. The Cysteine persulfide intermediate role is filled by cysteine 456.

Belongs to the ThiI family.

The protein resides in the cytoplasm. The enzyme catalyses [ThiI sulfur-carrier protein]-S-sulfanyl-L-cysteine + a uridine in tRNA + 2 reduced [2Fe-2S]-[ferredoxin] + ATP + H(+) = [ThiI sulfur-carrier protein]-L-cysteine + a 4-thiouridine in tRNA + 2 oxidized [2Fe-2S]-[ferredoxin] + AMP + diphosphate. It carries out the reaction [ThiS sulfur-carrier protein]-C-terminal Gly-Gly-AMP + S-sulfanyl-L-cysteinyl-[cysteine desulfurase] + AH2 = [ThiS sulfur-carrier protein]-C-terminal-Gly-aminoethanethioate + L-cysteinyl-[cysteine desulfurase] + A + AMP + 2 H(+). It participates in cofactor biosynthesis; thiamine diphosphate biosynthesis. In terms of biological role, catalyzes the ATP-dependent transfer of a sulfur to tRNA to produce 4-thiouridine in position 8 of tRNAs, which functions as a near-UV photosensor. Also catalyzes the transfer of sulfur to the sulfur carrier protein ThiS, forming ThiS-thiocarboxylate. This is a step in the synthesis of thiazole, in the thiamine biosynthesis pathway. The sulfur is donated as persulfide by IscS. The chain is tRNA sulfurtransferase from Salmonella paratyphi B (strain ATCC BAA-1250 / SPB7).